The following is a 239-amino-acid chain: Octanoyltransferase (239 aa).

Positions 48-236 constitute a BPL/LPL catalytic domain; it reads EGGDELVWLV…AFETVFGETT (189 aa). Residues 87–94, 167–169, and 180–182 each bind substrate; these read RGGEYTYH, ALG, and GLS. Catalysis depends on C198, which acts as the Acyl-thioester intermediate.

It belongs to the LipB family.

It localises to the cytoplasm. It carries out the reaction octanoyl-[ACP] + L-lysyl-[protein] = N(6)-octanoyl-L-lysyl-[protein] + holo-[ACP] + H(+). It functions in the pathway protein modification; protein lipoylation via endogenous pathway; protein N(6)-(lipoyl)lysine from octanoyl-[acyl-carrier-protein]: step 1/2. Catalyzes the transfer of endogenously produced octanoic acid from octanoyl-acyl-carrier-protein onto the lipoyl domains of lipoate-dependent enzymes. Lipoyl-ACP can also act as a substrate although octanoyl-ACP is likely to be the physiological substrate. The protein is Octanoyltransferase of Rhizobium etli (strain ATCC 51251 / DSM 11541 / JCM 21823 / NBRC 15573 / CFN 42).